We begin with the raw amino-acid sequence, 88 residues long: Probable Fe(2+)-trafficking protein (88 aa).

The protein belongs to the Fe(2+)-trafficking protein family.

Functionally, could be a mediator in iron transactions between iron acquisition and iron-requiring processes, such as synthesis and/or repair of Fe-S clusters in biosynthetic enzymes. This is Probable Fe(2+)-trafficking protein from Alkalilimnicola ehrlichii (strain ATCC BAA-1101 / DSM 17681 / MLHE-1).